We begin with the raw amino-acid sequence, 106 residues long: ATP-dependent Clp protease adapter protein ClpS (106 aa).

Belongs to the ClpS family. As to quaternary structure, binds to the N-terminal domain of the chaperone ClpA.

Functionally, involved in the modulation of the specificity of the ClpAP-mediated ATP-dependent protein degradation. In Aliivibrio fischeri (strain ATCC 700601 / ES114) (Vibrio fischeri), this protein is ATP-dependent Clp protease adapter protein ClpS.